A 344-amino-acid chain; its full sequence is N-acetyl-gamma-glutamyl-phosphate reductase (344 aa).

Residue C149 is part of the active site.

Belongs to the NAGSA dehydrogenase family. Type 1 subfamily.

The protein resides in the cytoplasm. The catalysed reaction is N-acetyl-L-glutamate 5-semialdehyde + phosphate + NADP(+) = N-acetyl-L-glutamyl 5-phosphate + NADPH + H(+). It functions in the pathway amino-acid biosynthesis; L-arginine biosynthesis; N(2)-acetyl-L-ornithine from L-glutamate: step 3/4. In terms of biological role, catalyzes the NADPH-dependent reduction of N-acetyl-5-glutamyl phosphate to yield N-acetyl-L-glutamate 5-semialdehyde. In Halorhodospira halophila (strain DSM 244 / SL1) (Ectothiorhodospira halophila (strain DSM 244 / SL1)), this protein is N-acetyl-gamma-glutamyl-phosphate reductase.